Consider the following 216-residue polypeptide: Orotate phosphoribosyltransferase (216 aa).

Residue Lys30 coordinates 5-phospho-alpha-D-ribose 1-diphosphate. Residue 38 to 39 coordinates orotate; it reads FF. Residues 75-76, Arg102, Lys103, Lys106, His108, and 128-136 each bind 5-phospho-alpha-D-ribose 1-diphosphate; these read YK and DDVITAGTA. Positions 132 and 160 each coordinate orotate.

It belongs to the purine/pyrimidine phosphoribosyltransferase family. PyrE subfamily. In terms of assembly, homodimer. Mg(2+) is required as a cofactor.

It catalyses the reaction orotidine 5'-phosphate + diphosphate = orotate + 5-phospho-alpha-D-ribose 1-diphosphate. The protein operates within pyrimidine metabolism; UMP biosynthesis via de novo pathway; UMP from orotate: step 1/2. In terms of biological role, catalyzes the transfer of a ribosyl phosphate group from 5-phosphoribose 1-diphosphate to orotate, leading to the formation of orotidine monophosphate (OMP). This is Orotate phosphoribosyltransferase from Acinetobacter baumannii (strain ATCC 17978 / DSM 105126 / CIP 53.77 / LMG 1025 / NCDC KC755 / 5377).